We begin with the raw amino-acid sequence, 864 residues long: A-kinase anchor protein 3 (864 aa).

Residue serine 12 is modified to Phosphoserine; by STK33. A PKA-RII subunit binding domain region spans residues 125-138; that stretch reads VSFYANRLTNLVIA. 2 disordered regions span residues 190–235 and 251–281; these read NISS…DKPG and AGDAKEGGRSLPGDQKLFRTSPDNRPDDFSN. The span at 204-218 shows a compositional bias: polar residues; the sequence is SGSSQAPGLRYTSTL. The residue at position 206 (serine 206) is a Phosphoserine. A compositionally biased stretch (basic and acidic residues) spans 219–235; the sequence is KIKESTKEGKCPDDKPG. At serine 405 the chain carries Phosphoserine. Tyrosine 406 carries the post-translational modification Phosphotyrosine. Residues 619–638 are disordered; that stretch reads VHEQNTQEEEIHPCERPKTP. Positions 627-638 are enriched in basic and acidic residues; that stretch reads EEIHPCERPKTP.

It belongs to the AKAP110 family. In terms of assembly, interacts with ROPN1 and ROPN1L. Interacts with QRICH2. Phosphorylated by STK33 during sperm flagella assembly. Phosphorylated on tyrosine.

The protein resides in the cytoplasmic vesicle. It is found in the secretory vesicle. The protein localises to the acrosome. Its subcellular location is the cell projection. It localises to the cilium. The protein resides in the flagellum. In terms of biological role, structural component of sperm fibrous sheath. Required for the formation of the subcellular structure of the sperm flagellum, sperm motility and male fertility. In Mus musculus (Mouse), this protein is A-kinase anchor protein 3.